A 309-amino-acid polypeptide reads, in one-letter code: T-lymphocyte activation antigen CD86 (309 aa).

The N-terminal stretch at 1–23 (MDPRCTMGLAILIFVTVLLISDA) is a signal peptide. Residues 24–244 (VSVETQAYFN…EFPSPQTYWK (221 aa)) are Extracellular-facing. Asparagine 33, asparagine 47, asparagine 92, asparagine 135, asparagine 146, asparagine 154, asparagine 175, asparagine 190, and asparagine 231 each carry an N-linked (GlcNAc...) asparagine glycan. Residues 33 to 128 (NGTAYLPCPF…GSIILQQTLT (96 aa)) form the Ig-like V-type domain. Cysteine 40 and cysteine 110 are disulfide-bonded. The region spanning 150–223 (NSGINLTCTS…VVCVLETESM (74 aa)) is the Ig-like C2-type domain. Cysteines 157 and 216 form a disulfide. Residues 245 to 265 (EITASVTVALLLVMLLIIVCH) form a helical membrane-spanning segment. The Cytoplasmic portion of the chain corresponds to 266 to 309 (KKPNQPSRPSNTASKLERDSNADRETINLKELEPQIASAKPNAE). Residues 269–279 (NQPSRPSNTAS) are compositionally biased toward polar residues. Residues 269–309 (NQPSRPSNTASKLERDSNADRETINLKELEPQIASAKPNAE) are disordered. The segment covering 280–298 (KLERDSNADRETINLKELE) has biased composition (basic and acidic residues).

As to quaternary structure, homodimer. Interacts with MARCH8. Interacts (via cytoplasmic domain) with PHB1 and PHB2; the interactions increases after priming with CD40. Interacts with CD28. Polyubiquitinated; which is promoted by MARCH8 and results in endocytosis and lysosomal degradation. Expressed on activated B-cells.

It localises to the cell membrane. In terms of biological role, receptor involved in the costimulatory signal essential for T-lymphocyte proliferation and interleukin-2 production, by binding CD28 or CTLA-4. May play a critical role in the early events of T-cell activation and costimulation of naive T-cells, such as deciding between immunity and anergy that is made by T-cells within 24 hours after activation. Also involved in the regulation of B cells function, plays a role in regulating the level of IgG(1) produced. Upon CD40 engagement, activates NF-kappa-B signaling pathway via phospholipase C and protein kinase C activation. This Mus musculus (Mouse) protein is T-lymphocyte activation antigen CD86 (Cd86).